The chain runs to 1464 residues: Gag-Pol polyprotein (1464 aa).

The N-myristoyl glycine; by host moiety is linked to residue glycine 2. An interaction with Gp41 region spans residues 7–31; sequence VLRGKKADELEKIRLRPSGKKKYRL. Positions 16–22 match the Nuclear export signal motif; the sequence is LEKIRLR. The Nuclear localization signal signature appears at 26 to 32; the sequence is KKKYRLK. The segment at 108 to 146 is disordered; sequence LGAETGTAEKMPSTSRPTAPPSGRGRNFPVQQTGGGNYI. The interval 192–229 is interaction with human PPIA/CYPA and NUP153; that stretch reads NCVGDHQAAMQIIREIINDEAADWDAQHPIPGPLPAGQ. Residues 280–366 form a dimerization/Multimerization of capsid protein p24 region; the sequence is YNPTNILDVK…GGPGQKARLM (87 aa). CCHC-type zinc fingers lie at residues 390 to 407 and 411 to 428; these read IRCW…QCRA and QGCW…KCPE. Positions 434-509 are disordered; sequence LRDGSMGKEA…GKSTSQRGDR (76 aa). Residues 459-468 show a composition bias toward low complexity; sequence STPSRSSSGS. Over residues 477–492 the composition is skewed to basic and acidic residues; the sequence is ERAEGAEGETIQRGDG. Positions 514 to 518 are dimerization of protease; it reads PQFSL. The Peptidase A2 domain occupies 533–602; the sequence is VEVLLDTGAD…TPINIFGRNI (70 aa). The For protease activity; shared with dimeric partner role is filled by aspartate 538. Dimerization of protease stretches follow at residues 562 to 568 and 601 to 613; these read GIGGFIN and NILT…LNLP. The 191-residue stretch at 656 to 846 folds into the Reverse transcriptase domain; that stretch reads EGQLEEAPPT…PPLQWMGYEL (191 aa). Residues aspartate 722, aspartate 797, and aspartate 798 each contribute to the Mg(2+) site. Residues 839 to 847 are RT 'primer grip'; it reads LQWMGYELW. Positions 1009–1025 match the Tryptophan repeat motif motif; the sequence is WEQWWDNYWQVTWIPEW. An RNase H type-1 domain is found at 1045 to 1168; that stretch reads IPGAETFYTD…VDHLVSQGIR (124 aa). Positions 1054, 1089, 1109, and 1160 each coordinate Mg(2+). An Integrase-type zinc finger spans residues 1174 to 1215; it reads ERIEPAQEEHEKYHSNMKELTHKFGIPQLVARQIVNTCAQCQ. Positions 1183, 1187, 1211, and 1214 each coordinate Zn(2+). The Integrase catalytic domain occupies 1224 to 1375; it reads QVNAEIGVWQ…TPAERLINMI (152 aa). 3 residues coordinate Mg(2+): aspartate 1235, aspartate 1287, and glutamate 1323. The integrase-type DNA-binding region spans 1394 to 1441; the sequence is FQVYYREGRDQLWKGPGELLWKGDGAVIVKVGADIKVIPRRKAKIIRD.

In terms of assembly, homotrimer; further assembles as hexamers of trimers. Interacts with gp41 (via C-terminus). Interacts with host CALM1; this interaction induces a conformational change in the Matrix protein, triggering exposure of the myristate group. Interacts with host AP3D1; this interaction allows the polyprotein trafficking to multivesicular bodies during virus assembly. Part of the pre-integration complex (PIC) which is composed of viral genome, matrix protein, Vpr and integrase. As to quaternary structure, homodimer; the homodimer further multimerizes as homohexamers or homopentamers. Interacts with human PPIA/CYPA. Interacts with human NUP153. Interacts with host PDZD8; this interaction stabilizes the capsid. Interacts with monkey TRIM5; this interaction destabilizes the capsid. Homodimer, whose active site consists of two apposed aspartic acid residues. In terms of assembly, heterodimer of p66 RT and p51 RT (RT p66/p51). Heterodimerization of RT is essential for DNA polymerase activity. The overall folding of the subdomains is similar in p66 RT and p51 RT but the spatial arrangements of the subdomains are dramatically different. As to quaternary structure, homotetramer; may further associate as a homohexadecamer. Part of the pre-integration complex (PIC) which is composed of viral genome, matrix protein, Vpr and integrase. Interacts with human SMARCB1/INI1 and human PSIP1/LEDGF isoform 1. Interacts with human KPNA3; this interaction might play a role in nuclear import of the pre-integration complex. Interacts with human NUP153; this interaction might play a role in nuclear import of the pre-integration complex. The cofactor is Mg(2+). In terms of processing, specific enzymatic cleavages by the viral protease yield mature proteins. The protease is released by autocatalytic cleavage. The polyprotein is cleaved during and after budding, this process is termed maturation. Proteolytic cleavage of p66 RT removes the RNase H domain to yield the p51 RT subunit. Nucleocapsid protein p7 might be further cleaved after virus entry.

The protein resides in the host cell membrane. It localises to the host endosome. Its subcellular location is the host multivesicular body. The protein localises to the virion membrane. It is found in the host nucleus. The protein resides in the host cytoplasm. It localises to the virion. The catalysed reaction is Endopeptidase for which the P1 residue is preferably hydrophobic.. It catalyses the reaction Endohydrolysis of RNA in RNA/DNA hybrids. Three different cleavage modes: 1. sequence-specific internal cleavage of RNA. Human immunodeficiency virus type 1 and Moloney murine leukemia virus enzymes prefer to cleave the RNA strand one nucleotide away from the RNA-DNA junction. 2. RNA 5'-end directed cleavage 13-19 nucleotides from the RNA end. 3. DNA 3'-end directed cleavage 15-20 nucleotides away from the primer terminus.. The enzyme catalyses 3'-end directed exonucleolytic cleavage of viral RNA-DNA hybrid.. It carries out the reaction DNA(n) + a 2'-deoxyribonucleoside 5'-triphosphate = DNA(n+1) + diphosphate. Protease: The viral protease is inhibited by many synthetic protease inhibitors (PIs), such as amprenavir, atazanavir, indinavir, loprinavir, nelfinavir, ritonavir and saquinavir. Use of protease inhibitors in tritherapy regimens permit more ambitious therapeutic strategies. Reverse transcriptase/ribonuclease H: RT can be inhibited either by nucleoside RT inhibitors (NRTIs) or by non nucleoside RT inhibitors (NNRTIs). NRTIs act as chain terminators, whereas NNRTIs inhibit DNA polymerization by binding a small hydrophobic pocket near the RT active site and inducing an allosteric change in this region. Classical NRTIs are abacavir, adefovir (PMEA), didanosine (ddI), lamivudine (3TC), stavudine (d4T), tenofovir (PMPA), zalcitabine (ddC), and zidovudine (AZT). Classical NNRTIs are atevirdine (BHAP U-87201E), delavirdine, efavirenz (DMP-266), emivirine (I-EBU), and nevirapine (BI-RG-587). The tritherapies used as a basic effective treatment of AIDS associate two NRTIs and one NNRTI. In terms of biological role, mediates, with Gag polyprotein, the essential events in virion assembly, including binding the plasma membrane, making the protein-protein interactions necessary to create spherical particles, recruiting the viral Env proteins, and packaging the genomic RNA via direct interactions with the RNA packaging sequence (Psi). Gag-Pol polyprotein may regulate its own translation, by the binding genomic RNA in the 5'-UTR. At low concentration, the polyprotein would promote translation, whereas at high concentration, the polyprotein would encapsidate genomic RNA and then shut off translation. Functionally, targets the polyprotein to the plasma membrane via a multipartite membrane-binding signal, that includes its myristoylated N-terminus. Matrix protein is part of the pre-integration complex. Implicated in the release from host cell mediated by Vpu. Binds to RNA. Its function is as follows. Forms the conical core that encapsulates the genomic RNA-nucleocapsid complex in the virion. Most core are conical, with only 7% tubular. The core is constituted by capsid protein hexamer subunits. The core is disassembled soon after virion entry. Host restriction factors such as TRIM5-alpha or TRIMCyp bind retroviral capsids and cause premature capsid disassembly, leading to blocks in reverse transcription. Capsid restriction by TRIM5 is one of the factors which restricts HIV-1 to the human species. Host PIN1 apparently facilitates the virion uncoating. On the other hand, interactions with PDZD8 or CYPA stabilize the capsid. Encapsulates and protects viral dimeric unspliced genomic RNA (gRNA). Binds these RNAs through its zinc fingers. Acts as a nucleic acid chaperone which is involved in rearangement of nucleic acid secondary structure during gRNA retrotranscription. Also facilitates template switch leading to recombination. As part of the polyprotein, participates in gRNA dimerization, packaging, tRNA incorporation and virion assembly. In terms of biological role, aspartyl protease that mediates proteolytic cleavages of Gag and Gag-Pol polyproteins during or shortly after the release of the virion from the plasma membrane. Cleavages take place as an ordered, step-wise cascade to yield mature proteins. This process is called maturation. Displays maximal activity during the budding process just prior to particle release from the cell. Also cleaves Nef and Vif, probably concomitantly with viral structural proteins on maturation of virus particles. Hydrolyzes host EIF4GI and PABP1 in order to shut off the capped cellular mRNA translation. The resulting inhibition of cellular protein synthesis serves to ensure maximal viral gene expression and to evade host immune response. Functionally, multifunctional enzyme that converts the viral RNA genome into dsDNA in the cytoplasm, shortly after virus entry into the cell. This enzyme displays a DNA polymerase activity that can copy either DNA or RNA templates, and a ribonuclease H (RNase H) activity that cleaves the RNA strand of RNA-DNA heteroduplexes in a partially processive 3' to 5' endonucleasic mode. Conversion of viral genomic RNA into dsDNA requires many steps. A tRNA(3)-Lys binds to the primer-binding site (PBS) situated at the 5'-end of the viral RNA. RT uses the 3' end of the tRNA primer to perform a short round of RNA-dependent minus-strand DNA synthesis. The reading proceeds through the U5 region and ends after the repeated (R) region which is present at both ends of viral RNA. The portion of the RNA-DNA heteroduplex is digested by the RNase H, resulting in a ssDNA product attached to the tRNA primer. This ssDNA/tRNA hybridizes with the identical R region situated at the 3' end of viral RNA. This template exchange, known as minus-strand DNA strong stop transfer, can be either intra- or intermolecular. RT uses the 3' end of this newly synthesized short ssDNA to perform the RNA-dependent minus-strand DNA synthesis of the whole template. RNase H digests the RNA template except for two polypurine tracts (PPTs) situated at the 5'-end and near the center of the genome. It is not clear if both polymerase and RNase H activities are simultaneous. RNase H probably can proceed both in a polymerase-dependent (RNA cut into small fragments by the same RT performing DNA synthesis) and a polymerase-independent mode (cleavage of remaining RNA fragments by free RTs). Secondly, RT performs DNA-directed plus-strand DNA synthesis using the PPTs that have not been removed by RNase H as primers. PPTs and tRNA primers are then removed by RNase H. The 3' and 5' ssDNA PBS regions hybridize to form a circular dsDNA intermediate. Strand displacement synthesis by RT to the PBS and PPT ends produces a blunt ended, linear dsDNA copy of the viral genome that includes long terminal repeats (LTRs) at both ends. Its function is as follows. Catalyzes viral DNA integration into the host chromosome, by performing a series of DNA cutting and joining reactions. This enzyme activity takes place after virion entry into a cell and reverse transcription of the RNA genome in dsDNA. The first step in the integration process is 3' processing. This step requires a complex comprising the viral genome, matrix protein, Vpr and integrase. This complex is called the pre-integration complex (PIC). The integrase protein removes 2 nucleotides from each 3' end of the viral DNA, leaving recessed CA OH's at the 3' ends. In the second step, the PIC enters cell nucleus. This process is mediated through integrase and Vpr proteins, and allows the virus to infect a non dividing cell. This ability to enter the nucleus is specific of lentiviruses, other retroviruses cannot and rely on cell division to access cell chromosomes. In the third step, termed strand transfer, the integrase protein joins the previously processed 3' ends to the 5' ends of strands of target cellular DNA at the site of integration. The 5'-ends are produced by integrase-catalyzed staggered cuts, 5 bp apart. A Y-shaped, gapped, recombination intermediate results, with the 5'-ends of the viral DNA strands and the 3' ends of target DNA strands remaining unjoined, flanking a gap of 5 bp. The last step is viral DNA integration into host chromosome. This involves host DNA repair synthesis in which the 5 bp gaps between the unjoined strands are filled in and then ligated. Since this process occurs at both cuts flanking the HIV genome, a 5 bp duplication of host DNA is produced at the ends of HIV-1 integration. Alternatively, Integrase may catalyze the excision of viral DNA just after strand transfer, this is termed disintegration. The chain is Gag-Pol polyprotein (gag-pol) from Homo sapiens (Human).